We begin with the raw amino-acid sequence, 307 residues long: Dioxygenase cdmD (307 aa).

Fe cation is bound by residues His146, Asp148, and His226.

Belongs to the PhyH family. In terms of assembly, homodimer. It depends on Fe cation as a cofactor.

The catalysed reaction is verruculide A + 2-oxoglutarate + O2 = chrodrimanin T + succinate + CO2. It catalyses the reaction chrodrimanin E + 2-oxoglutarate + O2 = chrodrimanin A + succinate + CO2. It functions in the pathway secondary metabolite biosynthesis; terpenoid biosynthesis. In terms of biological role, dioxygenase; part of the gene cluster that mediates the biosynthesis of chrodrimanin B, a meroterpenoid that acts as a potent blocker of insect GABA-gated chloride channels. The first step of the pathway is the biosynthesis of 6-hydroxymellein by the polyketide synthase cdmE. The prenyltransferase cdmH acts as a 6-hydroxymellein 5-farnesyltransferase and produces the hydrophobic metabolite verruculide C. The FAD-dependent monooxygenase cdmI further converts verruculide C into verruculide B. The terpene cyclase cdmG then produced the pentacyclic molecule 3-hydroxypentacecilide A, the backbone structure of chrodrimanin B, via folding the farnesyl moiety of the substrate into the chair-boat conformation. The short-chain dehydrogenase/reductase cdmF functions as the 3-OH dehydrogenase that oxidizes the C-3 hydroxyl group of 3-hydroxypentacecilide A and produces chrodrimanin C, the dehydrogenated product of 3-hydroxypentacecilide A. The cytochrome P450 monooxygenase cdmJ then accepts both 3-hydroxypentacecilide A and chrodrimanin C and functions as a C-7-beta-hydroxylase to produce respectively chrodrimanin H and chrodrimanin F. The dioxygenase cdmA accepts chrodrimanin H to afford chrodrimanin E, which is further transformed to chrodrimanin A by the dioxygenase cdmD. CdmA can also accept chrodrimanin C as substrate to convert it into verruculide A, which is further converted into chrodrimanin T by cdmD. The last step of the biosynthesis is proposed to be performed by the acetyltransferase cdmC which acetylates chrodrimanin A to yield chrodrimanin B. The pathway may also lead to the production of additional shunt products, including chrodrimanins T and U. The protein is Dioxygenase cdmD of Talaromyces verruculosus (Penicillium verruculosum).